A 602-amino-acid polypeptide reads, in one-letter code: Elongation factor 4 (602 aa).

One can recognise a tr-type G domain in the interval 2-184; the sequence is KKIRNFAIIA…RIVRDIPPPK (183 aa). Residues 14-19 and 131-134 contribute to the GTP site; these read DHGKST and NKID.

Belongs to the TRAFAC class translation factor GTPase superfamily. Classic translation factor GTPase family. LepA subfamily.

The protein localises to the cell membrane. The enzyme catalyses GTP + H2O = GDP + phosphate + H(+). Its function is as follows. Required for accurate and efficient protein synthesis under certain stress conditions. May act as a fidelity factor of the translation reaction, by catalyzing a one-codon backward translocation of tRNAs on improperly translocated ribosomes. Back-translocation proceeds from a post-translocation (POST) complex to a pre-translocation (PRE) complex, thus giving elongation factor G a second chance to translocate the tRNAs correctly. Binds to ribosomes in a GTP-dependent manner. This Baumannia cicadellinicola subsp. Homalodisca coagulata protein is Elongation factor 4.